Reading from the N-terminus, the 307-residue chain is Ribonuclease Z (307 aa).

Histidine 63, histidine 65, aspartate 67, histidine 68, histidine 141, aspartate 212, and histidine 270 together coordinate Zn(2+). Aspartate 67 functions as the Proton acceptor in the catalytic mechanism.

Belongs to the RNase Z family. Homodimer. It depends on Zn(2+) as a cofactor.

The catalysed reaction is Endonucleolytic cleavage of RNA, removing extra 3' nucleotides from tRNA precursor, generating 3' termini of tRNAs. A 3'-hydroxy group is left at the tRNA terminus and a 5'-phosphoryl group is left at the trailer molecule.. Functionally, zinc phosphodiesterase, which displays some tRNA 3'-processing endonuclease activity. Probably involved in tRNA maturation, by removing a 3'-trailer from precursor tRNA. The protein is Ribonuclease Z of Bacillus mycoides (strain KBAB4) (Bacillus weihenstephanensis).